We begin with the raw amino-acid sequence, 89 residues long: Mu-like prophage FluMu DNA-binding protein Ner (89 aa).

The segment at residues 57–76 is a DNA-binding region (H-T-H motif); that stretch reads ERLVANAIGVPPEVIWAGRF.

This sequence belongs to the ner transcriptional regulatory family.

Its function is as follows. Negative regulator of transcription starting from the Pe and Pc promoters of Mu. Also negatively regulates its own gene transcription. In Haemophilus influenzae (strain ATCC 51907 / DSM 11121 / KW20 / Rd), this protein is Mu-like prophage FluMu DNA-binding protein Ner (nlp).